Reading from the N-terminus, the 418-residue chain is Serine--tRNA ligase (418 aa).

227 to 229 (TSE) is a binding site for L-serine. Residues 258–260 (RRE) and V274 contribute to the ATP site. E281 is a binding site for L-serine. 345–348 (ELTS) lines the ATP pocket. T380 is a binding site for L-serine.

The protein belongs to the class-II aminoacyl-tRNA synthetase family. Type-1 seryl-tRNA synthetase subfamily. In terms of assembly, homodimer. The tRNA molecule binds across the dimer.

The protein resides in the cytoplasm. The catalysed reaction is tRNA(Ser) + L-serine + ATP = L-seryl-tRNA(Ser) + AMP + diphosphate + H(+). It catalyses the reaction tRNA(Sec) + L-serine + ATP = L-seryl-tRNA(Sec) + AMP + diphosphate + H(+). Its pathway is aminoacyl-tRNA biosynthesis; selenocysteinyl-tRNA(Sec) biosynthesis; L-seryl-tRNA(Sec) from L-serine and tRNA(Sec): step 1/1. Catalyzes the attachment of serine to tRNA(Ser). Is also able to aminoacylate tRNA(Sec) with serine, to form the misacylated tRNA L-seryl-tRNA(Sec), which will be further converted into selenocysteinyl-tRNA(Sec). This Rhodococcus opacus (strain B4) protein is Serine--tRNA ligase.